Here is a 412-residue protein sequence, read N- to C-terminus: Phosphoglycerate kinase (412 aa).

Substrate is bound by residues 22-24 (DFN), arginine 37, 60-63 (HLGK), arginine 120, and arginine 172. ATP contacts are provided by residues lysine 223, glycine 310, glutamate 341, and 368-371 (GGDS).

Belongs to the phosphoglycerate kinase family. In terms of assembly, monomer.

The protein localises to the cytoplasm. The enzyme catalyses (2R)-3-phosphoglycerate + ATP = (2R)-3-phospho-glyceroyl phosphate + ADP. Its pathway is carbohydrate degradation; glycolysis; pyruvate from D-glyceraldehyde 3-phosphate: step 2/5. The protein is Phosphoglycerate kinase of Spiroplasma citri.